A 158-amino-acid polypeptide reads, in one-letter code: Transcription elongation factor GreB (158 aa).

Belongs to the GreA/GreB family. GreB subfamily.

Its function is as follows. Necessary for efficient RNA polymerase transcription elongation past template-encoded arresting sites. The arresting sites in DNA have the property of trapping a certain fraction of elongating RNA polymerases that pass through, resulting in locked ternary complexes. Cleavage of the nascent transcript by cleavage factors such as GreA or GreB allows the resumption of elongation from the new 3'terminus. GreB releases sequences of up to 9 nucleotides in length. This Escherichia coli O157:H7 protein is Transcription elongation factor GreB.